Consider the following 206-residue polypeptide: dITP/XTP pyrophosphatase (206 aa).

7–12 (SNNAKK) is a substrate binding site. Asp72 serves as the catalytic Proton acceptor. Residue Asp72 coordinates Mg(2+). Substrate is bound by residues Ser73, 155 to 158 (FGYD), Lys182, and 187 to 188 (HR).

This sequence belongs to the HAM1 NTPase family. As to quaternary structure, homodimer. Mg(2+) serves as cofactor.

It catalyses the reaction XTP + H2O = XMP + diphosphate + H(+). The catalysed reaction is dITP + H2O = dIMP + diphosphate + H(+). It carries out the reaction ITP + H2O = IMP + diphosphate + H(+). Its function is as follows. Pyrophosphatase that catalyzes the hydrolysis of nucleoside triphosphates to their monophosphate derivatives, with a high preference for the non-canonical purine nucleotides XTP (xanthosine triphosphate), dITP (deoxyinosine triphosphate) and ITP. Seems to function as a house-cleaning enzyme that removes non-canonical purine nucleotides from the nucleotide pool, thus preventing their incorporation into DNA/RNA and avoiding chromosomal lesions. This is dITP/XTP pyrophosphatase from Corynebacterium glutamicum (strain ATCC 13032 / DSM 20300 / JCM 1318 / BCRC 11384 / CCUG 27702 / LMG 3730 / NBRC 12168 / NCIMB 10025 / NRRL B-2784 / 534).